Consider the following 184-residue polypeptide: Dynactin subunit 6 (184 aa).

This sequence belongs to the dynactin subunits 5/6 family. Dynactin subunit 6 subfamily. Subunit of dynactin, a multiprotein complex part of a tripartite complex with dynein and a adapter, such as BICDL1, BICD2 or HOOK3. The dynactin complex is built around ACTR1A/ACTB filament and consists of an actin-related filament composed of a shoulder domain, a pointed end and a barbed end.

It is found in the cytoplasm. The protein localises to the cytoskeleton. In terms of biological role, part of the dynactin complex that activates the molecular motor dynein for ultra-processive transport along microtubules. This chain is Dynactin subunit 6 (dctn6), found in Nematostella vectensis (Starlet sea anemone).